The sequence spans 550 residues: Membrane protein insertase YidC (550 aa).

Transmembrane regions (helical) follow at residues 6-26 (LVLF…WLKQ), 333-353 (VVDY…LSWI), 356-376 (VVGN…LMFF), 430-450 (LPIL…LGSV), 469-489 (PYFI…KLNP), and 504-524 (PVIF…YWVV).

The protein belongs to the OXA1/ALB3/YidC family. Type 1 subfamily. In terms of assembly, interacts with the Sec translocase complex via SecD. Specifically interacts with transmembrane segments of nascent integral membrane proteins during membrane integration.

It is found in the cell inner membrane. In terms of biological role, required for the insertion and/or proper folding and/or complex formation of integral membrane proteins into the membrane. Involved in integration of membrane proteins that insert both dependently and independently of the Sec translocase complex, as well as at least some lipoproteins. Aids folding of multispanning membrane proteins. This is Membrane protein insertase YidC from Aromatoleum aromaticum (strain DSM 19018 / LMG 30748 / EbN1) (Azoarcus sp. (strain EbN1)).